The following is a 482-amino-acid chain: Nicotine dehydrogenase (482 aa).

Positions 1-38 (MSDKTKTNEGFSRRSFIGSAAVVTAGVAGLGAIDAASA) form a signal peptide, tat-type signal. Positions 64, 83, 84, 85, 91, 108, and 279 each coordinate FAD. Residue Thr-381 participates in (S)-nicotine binding. Ala-453, Asn-462, and Ile-463 together coordinate FAD.

This sequence belongs to the flavin monoamine oxidase family. In terms of assembly, monomer in solution. Homodimer in solution. Forms homodimers in the crystal. It depends on FAD as a cofactor. Post-translationally, predicted to be exported by the Tat system. The position of the signal peptide cleavage has not been experimentally proven.

It is found in the periplasm. It carries out the reaction (S)-nicotine + 2 Fe(III)-[cytochrome c] = N-methylmyosmine + 2 Fe(II)-[cytochrome c] + 2 H(+). It participates in alkaloid degradation; nicotine degradation. Its activity is regulated as follows. The catalytic rate is not significantly affected by pH. Involved in nicotine degradation. Catalyzes the conversion of nicotine to N-methylmyosmine. N-methylmyosmine undergoes spontaneous hydrolysis to form pseudooxynicotine (PN). S-nicotine is the optimal substrate. Has lower activity with some nicotine analogs, but shows no activity towards neurotransmitters, including serotonin, dopamine, and norepinephrine, nicotine metabolites and common neuroactive drugs. The enzyme is stereospecific with poor activity with (R)-nicotine as the substrate. The c-type cytochrome protein CycN is the physiological electron acceptor. O(2) is a poor electron acceptor. The protein is Nicotine dehydrogenase of Pseudomonas putida (strain DSM 28022 / S16).